Consider the following 247-residue polypeptide: Probable transcriptional regulatory protein LBF_0056 (247 aa).

It belongs to the TACO1 family.

It localises to the cytoplasm. This Leptospira biflexa serovar Patoc (strain Patoc 1 / Ames) protein is Probable transcriptional regulatory protein LBF_0056.